We begin with the raw amino-acid sequence, 409 residues long: 4-hydroxy-3-methylbut-2-en-1-yl diphosphate synthase (flavodoxin) (409 aa).

[4Fe-4S] cluster contacts are provided by Cys298, Cys301, Cys344, and Glu351.

It belongs to the IspG family. The cofactor is [4Fe-4S] cluster.

The enzyme catalyses (2E)-4-hydroxy-3-methylbut-2-enyl diphosphate + oxidized [flavodoxin] + H2O + 2 H(+) = 2-C-methyl-D-erythritol 2,4-cyclic diphosphate + reduced [flavodoxin]. It functions in the pathway isoprenoid biosynthesis; isopentenyl diphosphate biosynthesis via DXP pathway; isopentenyl diphosphate from 1-deoxy-D-xylulose 5-phosphate: step 5/6. In terms of biological role, converts 2C-methyl-D-erythritol 2,4-cyclodiphosphate (ME-2,4cPP) into 1-hydroxy-2-methyl-2-(E)-butenyl 4-diphosphate. This Dechloromonas aromatica (strain RCB) protein is 4-hydroxy-3-methylbut-2-en-1-yl diphosphate synthase (flavodoxin).